Consider the following 449-residue polypeptide: Mycosin-1 (449 aa).

An N-terminal signal peptide occupies residues 1–23 (MQRVAVMVLAVLLALFSAPPAWA). A disulfide bond links cysteine 51 and cysteine 120. The region spanning 66-389 (PWANDYLRIQ…AGVIDPVAAL (324 aa)) is the Peptidase S8 domain. Residues aspartate 92 and histidine 123 each act as charge relay system in the active site. Disordered regions lie at residues 160 to 179 (FQPKGARQDPNDPNTTQTAG) and 240 to 259 (TGQDCSQNPPPDPSVPSDPR). Polar residues predominate over residues 170-179 (NDPNTTQTAG). A disulfide bridge links cysteine 206 with cysteine 244. Serine 334 acts as the Charge relay system in catalysis. The helical transmembrane segment at 421–441 (ITAVVIAGATLAFALGIGALA) threads the bilayer.

It belongs to the peptidase S8 family.

The protein localises to the cell membrane. In terms of biological role, may play a dual role in regulation of ESX-1 secretion and virulence. Acts as a protease that cleaves EspB. The polypeptide is Mycosin-1 (Mycolicibacterium smegmatis (strain ATCC 700084 / mc(2)155) (Mycobacterium smegmatis)).